A 459-amino-acid polypeptide reads, in one-letter code: UDP-N-acetylglucosamine 1-carboxyvinyltransferase (459 aa).

40-41 is a binding site for phosphoenolpyruvate; sequence KN. Arg-111 contacts UDP-N-acetyl-alpha-D-glucosamine. The active-site Proton donor is the Cys-135. Cys-135 carries the 2-(S-cysteinyl)pyruvic acid O-phosphothioketal modification. UDP-N-acetyl-alpha-D-glucosamine is bound by residues 140-144, Asp-324, and Val-346; that span reads RPVDL. Residues 437–459 form a disordered region; sequence PSAPPSEVSSAVAAGPDAAAAPV. Over residues 441–459 the composition is skewed to low complexity; it reads PSEVSSAVAAGPDAAAAPV.

This sequence belongs to the EPSP synthase family. MurA subfamily.

It is found in the cytoplasm. It catalyses the reaction phosphoenolpyruvate + UDP-N-acetyl-alpha-D-glucosamine = UDP-N-acetyl-3-O-(1-carboxyvinyl)-alpha-D-glucosamine + phosphate. It functions in the pathway cell wall biogenesis; peptidoglycan biosynthesis. Functionally, cell wall formation. Adds enolpyruvyl to UDP-N-acetylglucosamine. The sequence is that of UDP-N-acetylglucosamine 1-carboxyvinyltransferase from Gloeobacter violaceus (strain ATCC 29082 / PCC 7421).